The chain runs to 161 residues: Lipoprotein signal peptidase (161 aa).

4 helical membrane-spanning segments follow: residues proline 11–valine 31, leucine 44–phenylalanine 64, glycine 66–alanine 86, and glycine 100–isoleucine 120. Catalysis depends on residues aspartate 121 and aspartate 137. Residues leucine 135–valine 155 traverse the membrane as a helical segment.

The protein belongs to the peptidase A8 family.

It is found in the cell inner membrane. It catalyses the reaction Release of signal peptides from bacterial membrane prolipoproteins. Hydrolyzes -Xaa-Yaa-Zaa-|-(S,diacylglyceryl)Cys-, in which Xaa is hydrophobic (preferably Leu), and Yaa (Ala or Ser) and Zaa (Gly or Ala) have small, neutral side chains.. Its pathway is protein modification; lipoprotein biosynthesis (signal peptide cleavage). Its function is as follows. This protein specifically catalyzes the removal of signal peptides from prolipoproteins. The protein is Lipoprotein signal peptidase of Synechocystis sp. (strain ATCC 27184 / PCC 6803 / Kazusa).